Consider the following 471-residue polypeptide: D-hydantoinase (471 aa).

Zn(2+)-binding residues include His-58, His-60, and Lys-150. Residue Lys-150 is modified to N6-carboxylysine. Tyr-155 contributes to the substrate binding site. Zn(2+) is bound by residues His-183 and His-239. Position 288 (Ser-288) interacts with substrate. Asp-315 lines the Zn(2+) pocket. Position 337 (Asn-337) interacts with substrate.

Belongs to the metallo-dependent hydrolases superfamily. Hydantoinase/dihydropyrimidinase family. As to quaternary structure, homotetramer. Zn(2+) serves as cofactor. It depends on Ni(2+) as a cofactor. Co(2+) is required as a cofactor. The cofactor is Mn(2+). Carboxylation allows a single lysine to coordinate two zinc ions.

Completely inhibited by p-chloromercuribenzoate and partially inhibited by metal chelating agents. Its function is as follows. Catalyzes the stereospecific hydrolysis of the cyclic amide bond of D-hydantoin. Has no activity on dihydropyrimidines. This Geobacillus stearothermophilus (Bacillus stearothermophilus) protein is D-hydantoinase.